We begin with the raw amino-acid sequence, 683 residues long: MASKLTTTSQHILENLGGPDNITSMTHCATRLRFQVKDQSIVDQQEIDSDPSVLGVVPQGSTGMQVVMGGSVANYYQEILKLDGMKHFADGEATESSSKKEYGGVRGKYSWIDYAFEFLSDTFRPILWALLGASLIITLLVLADTFGLQDFRAPMDEQPDTYVFLHSMWRSVFYFLPIMVGATAARKLGANEWIGAAIPAALLTPEFLALGSAGDTVTVFGLPMVLNDYSGQVFPPLIAAIGLYWVEKGLKKIIPEAVQMVFVPFFSLLIMIPATAFLLGPFGIGVGNGISNLLEAINNFSPFILSIVIPLLYPFLVPLGLHWPLNAIMIQNINTLGYDFIQGPMGAWNFACFGLVTGVFLLSIKERNKAMRQVSLGGMLAGLLGGISEPSLYGVLLRFKKTYFRLLPGCLAGGIVMGIFDIKAYAFVFTSLLTIPAMDPWLGYTIGIAVAFFVSMFLVLALDYRSNEERDEARAKVAADKQAEEDLKAEANATPAAPVAAAGAGAGAGAGAAAGAATAVAAKPKLAAGEVVDIVSPLEGKAIPLSEVPDPIFAAGKLGPGIAIQPTGNTVVAPADATVILVQKSGHAVALRLDSGVEILVHVGLDTVQLGGEGFTVHVERRQQVKAGDPLITFDADFIRSKDLPLITPVVVSNAAKFGEIEGIPADQANSSTTVIKVNGKNE.

The 89-residue stretch at 1–89 (MASKLTTTSQ…LKLDGMKHFA (89 aa)) folds into the PTS EIIB type-1 domain. Catalysis depends on C28, which acts as the Phosphocysteine intermediate; for EIIB activity. Positions 117-476 (EFLSDTFRPI…NEERDEARAK (360 aa)) constitute a PTS EIIC type-1 domain. The next 10 membrane-spanning stretches (helical) occupy residues 126–146 (ILWALLGASLIITLLVLADTF), 162–182 (YVFLHSMWRSVFYFLPIMVGA), 193–213 (WIGAAIPAALLTPEFLALGSA), 225–245 (VLNDYSGQVFPPLIAAIGLYW), 260–280 (MVFVPFFSLLIMIPATAFLLG), 303–323 (FILSIVIPLLYPFLVPLGLHW), 344–364 (PMGAWNFACFGLVTGVFLLSI), 376–396 (LGGMLAGLLGGISEPSLYGVL), 409–429 (GCLAGGIVMGIFDIKAYAFVF), and 442–462 (LGYTIGIAVAFFVSMFLVLAL). One can recognise a PTS EIIA type-1 domain in the interval 550–654 (DPIFAAGKLG…PLITPVVVSN (105 aa)). The active-site Tele-phosphohistidine intermediate; for EIIA activity is the H602.

It localises to the cell membrane. It carries out the reaction D-mannose(out) + N(pros)-phospho-L-histidyl-[protein] = D-mannose 6-phosphate(in) + L-histidyl-[protein]. Functionally, the phosphoenolpyruvate-dependent sugar phosphotransferase system (sugar PTS), a major carbohydrate active -transport system, catalyzes the phosphorylation of incoming sugar substrates concomitantly with their translocation across the cell membrane. This system is involved in mannose transport. In Corynebacterium glutamicum (strain ATCC 13032 / DSM 20300 / JCM 1318 / BCRC 11384 / CCUG 27702 / LMG 3730 / NBRC 12168 / NCIMB 10025 / NRRL B-2784 / 534), this protein is PTS system mannose-specific EIIBCA component (ptsM).